The sequence spans 1026 residues: Multidrug resistance protein MdtC (1026 aa).

Helical transmembrane passes span 15 to 35 (ILIA…LPVA), 333 to 353 (EVEE…FLFL), 360 to 380 (LIPA…MYLC), 387 to 407 (LSLM…IVVL), 431 to 451 (VGFT…PLLL), 463 to 483 (FAVT…TLTP), 528 to 548 (LVGV…IAIP), 853 to 873 (LILI…LYES), 897 to 917 (LFNA…IGIV), 953 to 973 (PIMM…LSGG), and 984 to 1004 (ITIV…TPVV).

Belongs to the resistance-nodulation-cell division (RND) (TC 2.A.6) family. MdtC subfamily. As to quaternary structure, part of a tripartite efflux system composed of MdtA, MdtB and MdtC. MdtC forms a heteromultimer with MdtB.

The protein resides in the cell inner membrane. This Salmonella newport (strain SL254) protein is Multidrug resistance protein MdtC.